The chain runs to 490 residues: E3 ubiquitin-protein ligase Hakai (490 aa).

The interval 34 to 60 (QANKAKPAPRTQRTINRMPAKAPPGDE) is disordered. An RING-type zinc finger spans residues 108–148 (CDKCGLPIKIYGRMIPCKHVFCYDCAILHEKKGDKMCPGCS). Residues 147 to 205 (CSDPVQRIEQCTRGSLFMCSIVQGCKRTYLSQRDLQAHINHRHMRAGKPVTRASLENVH) form an HYB domain region. The segment at 163–189 (FMCSIVQGCKRTYLSQRDLQAHINHRH) adopts a C2H2-type zinc-finger fold. Phosphoserine is present on residues Ser200, Ser284, and Ser289. The tract at residues 254–490 (QPHEDIRAPP…DQTRYRPYYQ (237 aa)) is disordered. Composition is skewed to pro residues over residues 341 to 358 (APPP…PHPP), 371 to 388 (APPP…PPPG), and 398 to 422 (MNHP…PPHH). Residues 426–441 (NSLPQFTEDQGTLSPP) show a composition bias toward polar residues. The span at 456 to 477 (PRGPPPPPRLQGPPSQTPLPGP) shows a compositional bias: pro residues.

Belongs to the Hakai family. Homodimer. Interacts with tyrosine-phosphorylated SRC substrates. Component of the WMM complex, a N6-methyltransferase complex composed of a catalytic subcomplex, named MAC, and of an associated subcomplex, named MACOM. The MAC subcomplex is composed of METTL3 and METTL14. The MACOM subcomplex is composed of WTAP, ZC3H13, CBLL1/HAKAI, VIRMA, and, in some cases of RBM15 (RBM15 or RBM15B). Also a component of a MACOM-like complex, named WTAP complex, composed of WTAP, ZC3H13, CBLL1, VIRMA, RBM15, BCLAF1 and THRAP3. Phosphorylated on tyrosine residues.

The protein localises to the nucleus speckle. It is found in the nucleus. Its subcellular location is the nucleoplasm. It localises to the cytoplasm. It carries out the reaction S-ubiquitinyl-[E2 ubiquitin-conjugating enzyme]-L-cysteine + [acceptor protein]-L-lysine = [E2 ubiquitin-conjugating enzyme]-L-cysteine + N(6)-ubiquitinyl-[acceptor protein]-L-lysine.. It participates in protein modification; protein ubiquitination. E3 ubiquitin-protein ligase that mediates ubiquitination of several tyrosine-phosphorylated Src substrates, including CDH1, CTTN and DOK1. Targets CDH1 for endocytosis and degradation. Associated component of the WMM complex, a complex that mediates N6-methyladenosine (m6A) methylation of RNAs, a modification that plays a role in the efficiency of mRNA splicing and RNA processing. Its function in the WMM complex is unknown. In Macaca fascicularis (Crab-eating macaque), this protein is E3 ubiquitin-protein ligase Hakai.